Consider the following 137-residue polypeptide: Putative transcription elongation factor S-II-like protein 055R (137 aa).

The TFIIS-type zinc-finger motif lies at 85 to 136 (DFITCPYEVSEGVLRCGKCDCTKILWFSKQTRSMDEPTTIFASCSNCKTRWT). The Zn(2+) site is built by cysteine 89, cysteine 103, cysteine 128, and cysteine 131.

This sequence belongs to the IIV-6 349L family.

The sequence is that of Putative transcription elongation factor S-II-like protein 055R from Aedes vexans (Inland floodwater mosquito).